The primary structure comprises 328 residues: P2Y purinoceptor 6 (328 aa).

At 1–27 the chain is on the extracellular side; sequence MEWDNGTGQALGLPPTTCVYRENFKQL. Residue Asn5 is glycosylated (N-linked (GlcNAc...) asparagine). Residues 28–48 form a helical membrane-spanning segment; that stretch reads LLPPVYSAVLAAGLPLNICVI. The Cytoplasmic portion of the chain corresponds to 49–62; sequence TQICTSRRALTRTA. Residues 63–83 form a helical membrane-spanning segment; that stretch reads VYTLNLALADLLYACSLPLLI. Residues 84–101 lie on the Extracellular side of the membrane; that stretch reads YNYAQGDHWPFGDFACRL. The cysteines at positions 99 and 177 are disulfide-linked. Residues 102–122 form a helical membrane-spanning segment; that stretch reads VRFLFYANLHGSILFLTCISF. Residues 123–144 lie on the Cytoplasmic side of the membrane; the sequence is QRYLGICHPLAPWHKRGGRRAA. Residues 145–165 form a helical membrane-spanning segment; it reads WLVCVAVWLAVTTQCLPTAIF. Topologically, residues 166–194 are extracellular; that stretch reads AATGIQRNRTVCYDLSPPALATHYMPYGM. Residues 195–215 form a helical membrane-spanning segment; sequence ALTVIGFLLPFAALLACYCLL. Over 216-236 the chain is Cytoplasmic; the sequence is ACRLCRQDGPAEPVAQERRGK. Residues 237–257 form a helical membrane-spanning segment; sequence AARMAVVVAAAFAISFLPFHI. Over 258–280 the chain is Extracellular; that stretch reads TKTAYLAVRSTPGVPCTVLEAFA. A helical membrane pass occupies residues 281 to 303; that stretch reads AAYKGTRPFASANSVLDPILFYF. Residues 304 to 328 are Cytoplasmic-facing; sequence TQKKFRRRPHELLQKLTAKWQRQGR.

This sequence belongs to the G-protein coupled receptor 1 family.

The protein localises to the cell membrane. Receptor for extracellular UDP &gt; UTP &gt; ATP. The activity of this receptor is mediated by G proteins which activate a phosphatidylinositol-calcium second messenger system. This is P2Y purinoceptor 6 (P2RY6) from Homo sapiens (Human).